Here is a 171-residue protein sequence, read N- to C-terminus: Mitoferrin-1 (171 aa).

Residues 1 to 40 (MELRRGGVGSQARARRMDGDSRDGGGGCKDAGSEDYENLP) form a disordered region. One copy of the Solcar repeat lies at 43-131 (ASLSTHMTAG…FACYENMKRT (89 aa)). 3 helical membrane-spanning segments follow: residues 45 to 64 (LSTH…SVMY), 105 to 125 (RGLN…FACY), and 143 to 163 (HLAN…PSTD).

This sequence belongs to the mitochondrial carrier (TC 2.A.29) family. As to quaternary structure, interacts with ACB10; this interaction stabilizes SLC25A37 and enhances the function of SLC25A37 to import mitochondrial iron during erythroid differentiation.

The protein resides in the mitochondrion inner membrane. The enzyme catalyses Fe(2+)(in) = Fe(2+)(out). Mitochondrial iron transporter that specifically mediates iron uptake in developing erythroid cells, thereby playing an essential role in heme biosynthesis. This chain is Mitoferrin-1 (SLC25A37), found in Bos taurus (Bovine).